The following is a 76-amino-acid chain: Putative membrane protein insertion efficiency factor (76 aa).

The protein belongs to the UPF0161 family.

The protein localises to the cell inner membrane. Its function is as follows. Could be involved in insertion of integral membrane proteins into the membrane. This Paraburkholderia phytofirmans (strain DSM 17436 / LMG 22146 / PsJN) (Burkholderia phytofirmans) protein is Putative membrane protein insertion efficiency factor.